The sequence spans 219 residues: MGQKVNPCIFRTGPNLPRNWESVLYANKNNYSDFLLKILKIRKIINTEYSFAQITKILIEWPSSKNIVVNIYAKKIGVIIGKSGGDIEKLKQNIAKITSADVSINICEVKKPELEEAFIAQTIAQQLERRQSFKKVMKKAIHASMKQGAKGIKIICSGRLGGVEIARSESYKEGRVPLQTIRADIRYAFAEAITTYGVIGVKVWVYRCDVNQSRINEVK.

Residues 41 to 110 (IRKIINTEYS…DVSINICEVK (70 aa)) form the KH type-2 domain.

The protein belongs to the universal ribosomal protein uS3 family. Part of the 30S ribosomal subunit. Forms a tight complex with proteins S10 and S14.

Binds the lower part of the 30S subunit head. Binds mRNA in the 70S ribosome, positioning it for translation. This chain is Small ribosomal subunit protein uS3, found in Orientia tsutsugamushi (strain Ikeda) (Rickettsia tsutsugamushi).